The following is a 127-amino-acid chain: Aspartate 1-decarboxylase (127 aa).

Residue Ser-25 is the Schiff-base intermediate with substrate; via pyruvic acid of the active site. Ser-25 is subject to Pyruvic acid (Ser). Position 57 (Thr-57) interacts with substrate. Tyr-58 (proton donor) is an active-site residue. 73–75 (GAA) contributes to the substrate binding site.

It belongs to the PanD family. In terms of assembly, heterooctamer of four alpha and four beta subunits. It depends on pyruvate as a cofactor. Is synthesized initially as an inactive proenzyme, which is activated by self-cleavage at a specific serine bond to produce a beta-subunit with a hydroxyl group at its C-terminus and an alpha-subunit with a pyruvoyl group at its N-terminus.

The protein resides in the cytoplasm. The enzyme catalyses L-aspartate + H(+) = beta-alanine + CO2. It functions in the pathway cofactor biosynthesis; (R)-pantothenate biosynthesis; beta-alanine from L-aspartate: step 1/1. Functionally, catalyzes the pyruvoyl-dependent decarboxylation of aspartate to produce beta-alanine. The polypeptide is Aspartate 1-decarboxylase (Trichormus variabilis (strain ATCC 29413 / PCC 7937) (Anabaena variabilis)).